Reading from the N-terminus, the 337-residue chain is Fructose-1,6-bisphosphatase class 1 (337 aa).

Positions 94, 116, 118, and 119 each coordinate Mg(2+). Residues Asp-119 to Ser-122, Asn-210, and Lys-276 each bind substrate. Residue Glu-282 coordinates Mg(2+).

The protein belongs to the FBPase class 1 family. Homotetramer. Mg(2+) serves as cofactor.

Its subcellular location is the cytoplasm. It carries out the reaction beta-D-fructose 1,6-bisphosphate + H2O = beta-D-fructose 6-phosphate + phosphate. Its pathway is carbohydrate biosynthesis; gluconeogenesis. The protein is Fructose-1,6-bisphosphatase class 1 of Burkholderia orbicola (strain MC0-3).